The sequence spans 303 residues: Pycsar effector protein XpPycTIR (303 aa).

Position 14–138 (14–138 (LVATLTEHRL…RRIAATLARR (125 aa))) interacts with a nucleoside 3',5'-cyclic phosphate. Residues 154-273 (RVFIMSSVEA…DLAGLTTIPY (120 aa)) form a TIR-like region.

Its subcellular location is the cytoplasm. The catalysed reaction is NAD(+) + H2O = ADP-D-ribose + nicotinamide + H(+). Functionally, pycsar (pyrimidine cyclase system for antiphage resistance) provides immunity against bacteriophage. The pyrimidine cyclase (PycC) synthesizes cyclic nucleotides in response to infection; these serve as specific second messenger signals. The signals activate the adjacent effector, leading to bacterial cell death and abortive phage infection. A clade B Pycsar system. The effector gene of a two-gene Pycsar system. Expression of this and adjacent uridylate cyclase XpPycC (AC P0DV28) confers resistance to bacteriophage T7. When cells expressing the Pycsar system are infected by phage T7 at low multiplicity of infection (0.2 MOI) the culture survivey, at 2.0 MOI bacteria enter growth arrest. The same cells enter growth arrest after exposure to 2.5 mM cUMP but not cCMP; the effector protein responds only to the cUMP usually produced by its cognate NTP cyclase. NAD(+) levels in infected cells are depleted between 5 and 10 minutes after infection with T7 at MOI of 2. Probably only responds to cUMP. This is Pycsar effector protein XpPycTIR from Xanthomonas perforans.